Here is a 442-residue protein sequence, read N- to C-terminus: Proline--tRNA ligase (442 aa).

This sequence belongs to the class-II aminoacyl-tRNA synthetase family. ProS type 2 subfamily. In terms of assembly, homodimer.

The protein resides in the cytoplasm. The catalysed reaction is tRNA(Pro) + L-proline + ATP = L-prolyl-tRNA(Pro) + AMP + diphosphate. Its function is as follows. Catalyzes the attachment of proline to tRNA(Pro) in a two-step reaction: proline is first activated by ATP to form Pro-AMP and then transferred to the acceptor end of tRNA(Pro). This chain is Proline--tRNA ligase, found in Chelativorans sp. (strain BNC1).